The following is a 252-amino-acid chain: Ubiquinone biosynthesis protein COQ4 homolog 1, mitochondrial (252 aa).

4 residues coordinate Zn(2+): His-130, Asp-131, His-134, and Glu-146.

It belongs to the COQ4 family. In terms of assembly, component of a multi-subunit COQ enzyme complex. Requires Zn(2+) as cofactor.

Its subcellular location is the mitochondrion inner membrane. The catalysed reaction is a 4-hydroxy-3-methoxy-5-(all-trans-polyprenyl)benzoate + H(+) = a 2-methoxy-6-(all-trans-polyprenyl)phenol + CO2. It participates in cofactor biosynthesis; ubiquinone biosynthesis. Functionally, lyase that catalyzes the C1-decarboxylation of 4-hydroxy-3-methoxy-5-(all-trans-polyprenyl)benzoic acid into 2-methoxy-6-(all-trans-polyprenyl)phenol during ubiquinone biosynthesis. This chain is Ubiquinone biosynthesis protein COQ4 homolog 1, mitochondrial, found in Trypanosoma cruzi (strain CL Brener).